Consider the following 1370-residue polypeptide: DNA-directed RNA polymerase subunit beta (1370 aa).

The protein belongs to the RNA polymerase beta chain family. As to quaternary structure, the RNAP catalytic core consists of 2 alpha, 1 beta, 1 beta' and 1 omega subunit. When a sigma factor is associated with the core the holoenzyme is formed, which can initiate transcription.

It catalyses the reaction RNA(n) + a ribonucleoside 5'-triphosphate = RNA(n+1) + diphosphate. Functionally, DNA-dependent RNA polymerase catalyzes the transcription of DNA into RNA using the four ribonucleoside triphosphates as substrates. In Geobacter metallireducens (strain ATCC 53774 / DSM 7210 / GS-15), this protein is DNA-directed RNA polymerase subunit beta.